The primary structure comprises 375 residues: Dehydrodolichyl diphosphate synthase complex subunit NUS1 (375 aa).

Positions 1–28 (MPTMIKKDDKAMEPPNEKPHRKIERDDV) are enriched in basic and acidic residues. The tract at residues 1–48 (MPTMIKKDDKAMEPPNEKPHRKIERDDVPESSNHIPPPESGVLKGGKV) is disordered. The chain crosses the membrane as a helical span at residues 97–119 (YLFYKFLLVLLYICFGLFRYGQY).

It belongs to the UPP synthase family. In terms of assembly, forms an active dehydrodolichyl diphosphate synthase complex with either SRT1 or RER2. Requires Mg(2+) as cofactor.

The protein resides in the endoplasmic reticulum membrane. Its subcellular location is the lipid droplet. It localises to the nucleus membrane. It catalyses the reaction n isopentenyl diphosphate + (2E,6E)-farnesyl diphosphate = a di-trans,poly-cis-polyprenyl diphosphate + n diphosphate. It participates in protein modification; protein glycosylation. In terms of biological role, with SRT1 or RER2, forms the dehydrodolichyl diphosphate synthase (DDS) complex, an essential component of the dolichol monophosphate (Dol-P) biosynthetic machinery. Adds multiple copies of isopentenyl pyrophosphate (IPP) to farnesyl pyrophosphate (FPP) to produce dehydrodolichyl diphosphate (Dedol-PP), a precursor of dolichol which is utilized as a sugar carrier in protein glycosylation in the endoplasmic reticulum (ER). The protein is Dehydrodolichyl diphosphate synthase complex subunit NUS1 (NUS1) of Saccharomyces cerevisiae (strain ATCC 204508 / S288c) (Baker's yeast).